The sequence spans 492 residues: Probable cytochrome P450 313a1 (492 aa).

Cys-438 provides a ligand contact to heme.

This sequence belongs to the cytochrome P450 family. Requires heme as cofactor.

The protein resides in the endoplasmic reticulum membrane. The protein localises to the microsome membrane. In terms of biological role, may be involved in the metabolism of insect hormones and in the breakdown of synthetic insecticides. The protein is Probable cytochrome P450 313a1 (Cyp313a1) of Drosophila melanogaster (Fruit fly).